The sequence spans 123 residues: Large ribosomal subunit protein bL12 (123 aa).

It belongs to the bacterial ribosomal protein bL12 family. Homodimer. Part of the ribosomal stalk of the 50S ribosomal subunit. Forms a multimeric L10(L12)X complex, where L10 forms an elongated spine to which 2 to 4 L12 dimers bind in a sequential fashion. Binds GTP-bound translation factors.

Its function is as follows. Forms part of the ribosomal stalk which helps the ribosome interact with GTP-bound translation factors. Is thus essential for accurate translation. The polypeptide is Large ribosomal subunit protein bL12 (Burkholderia vietnamiensis (strain G4 / LMG 22486) (Burkholderia cepacia (strain R1808))).